A 95-amino-acid polypeptide reads, in one-letter code: Beta-defensin 132 (95 aa).

The first 22 residues, 1-22 (MKFLLLVLAALRFLTQVIPASA), serve as a signal peptide directing secretion. 3 disulfides stabilise this stretch: Cys27/Cys55, Cys35/Cys49, and Cys39/Cys56. The interval 72 to 95 (GNHWQSRRRNTQRKDKKQQTTVTS) is disordered. A compositionally biased stretch (basic residues) spans 76–87 (QSRRRNTQRKDK).

The protein belongs to the beta-defensin family.

Its subcellular location is the secreted. Functionally, has antibacterial activity. This is Beta-defensin 132 (DEFB132) from Pongo pygmaeus (Bornean orangutan).